We begin with the raw amino-acid sequence, 221 residues long: N-(5'-phosphoribosyl)anthranilate isomerase (221 aa).

It belongs to the TrpF family.

It catalyses the reaction N-(5-phospho-beta-D-ribosyl)anthranilate = 1-(2-carboxyphenylamino)-1-deoxy-D-ribulose 5-phosphate. It participates in amino-acid biosynthesis; L-tryptophan biosynthesis; L-tryptophan from chorismate: step 3/5. In Parabacteroides distasonis (strain ATCC 8503 / DSM 20701 / CIP 104284 / JCM 5825 / NCTC 11152), this protein is N-(5'-phosphoribosyl)anthranilate isomerase.